Reading from the N-terminus, the 388-residue chain is Succinate--CoA ligase [ADP-forming] subunit beta (388 aa).

One can recognise an ATP-grasp domain in the interval 9–244; that stretch reads KEILRKFGVA…LDEEDPAEIE (236 aa). ATP contacts are provided by residues K46, 53–55, E99, A102, and E107; that span reads GRG. Residues N199 and D213 each coordinate Mg(2+). Substrate contacts are provided by residues N264 and 321–323; that span reads GIM.

This sequence belongs to the succinate/malate CoA ligase beta subunit family. In terms of assembly, heterotetramer of two alpha and two beta subunits. Mg(2+) serves as cofactor.

The catalysed reaction is succinate + ATP + CoA = succinyl-CoA + ADP + phosphate. It carries out the reaction GTP + succinate + CoA = succinyl-CoA + GDP + phosphate. The protein operates within carbohydrate metabolism; tricarboxylic acid cycle; succinate from succinyl-CoA (ligase route): step 1/1. In terms of biological role, succinyl-CoA synthetase functions in the citric acid cycle (TCA), coupling the hydrolysis of succinyl-CoA to the synthesis of either ATP or GTP and thus represents the only step of substrate-level phosphorylation in the TCA. The beta subunit provides nucleotide specificity of the enzyme and binds the substrate succinate, while the binding sites for coenzyme A and phosphate are found in the alpha subunit. This chain is Succinate--CoA ligase [ADP-forming] subunit beta, found in Burkholderia multivorans (strain ATCC 17616 / 249).